The chain runs to 510 residues: Rab proteins geranylgeranyltransferase component A 1 (510 aa).

Belongs to the Rab GDI family. May interact with rab-5, rab-7 and rab-11. Does not interact with rab-3, rab-27 and rab-10. Expressed in several neurons including head neurons, motor neurons located in the ventral nerve cord, HSN and CAN neurons, and tail neurons, and in muscles such as body-wall, pharyngeal, intestinal and anal sphincter. Also expressed in seam cells, the hypodermis and the intestine.

It localises to the cytoplasm. Substrate-binding subunit of the Rab geranylgeranyltransferase (GGTase) complex. Binds unprenylated Rab proteins and presents the substrate peptide to the catalytic component B and remains bound to it after the geranylgeranyl transfer reaction. The component A is thought to be regenerated by transferring its prenylated Rab back to the donor membrane. Plays a role in neurotransmitter release from presynaptic terminals at neuromuscular junctions. Positively regulates the function of rab-27 in synaptic transmission most likely through mediating rab-27 prenylation. This is Rab proteins geranylgeranyltransferase component A 1 from Caenorhabditis elegans.